The sequence spans 35 residues: Tau/kappa-theraphotoxin-Pc1a (35 aa).

Disulfide bonds link Cys-3–Cys-17, Cys-10–Cys-22, and Cys-16–Cys-29. Phe-35 is subject to Phenylalanine amide.

The protein belongs to the neurotoxin 10 (Hwtx-1) family. 62 (Vatx) subfamily. Expressed by the venom gland.

The protein localises to the secreted. Functionally, selectively activates mammalian TRPV1, the capsaicin receptor, a non-selective cation channel expressed by sensory neurons of the pain pathway. Is less potent than VaTx2 and VaTx3. Interacts with distinct regions of the channel than capsaicin, since it only acts on the extracellular face of the channel, and capsaicin binds to the cytosolic side. Also activates avian TRPV1, which is insensitive to capsaicin. Significantly inhibits potassium channels Kv2.1/KCNB1. The polypeptide is Tau/kappa-theraphotoxin-Pc1a (Psalmopoeus cambridgei (Trinidad chevron tarantula)).